The primary structure comprises 233 residues: Sugar fermentation stimulation protein homolog (233 aa).

The protein belongs to the SfsA family.

The protein is Sugar fermentation stimulation protein homolog of Saccharophagus degradans (strain 2-40 / ATCC 43961 / DSM 17024).